Here is a 266-residue protein sequence, read N- to C-terminus: Glucosamine-6-phosphate deaminase (266 aa).

The active-site Proton acceptor; for enolization step is the Asp72. Residue Asp141 is the For ring-opening step of the active site. His143 acts as the Proton acceptor; for ring-opening step in catalysis. Glu148 serves as the catalytic For ring-opening step.

This sequence belongs to the glucosamine/galactosamine-6-phosphate isomerase family. NagB subfamily. In terms of assembly, homohexamer; trimer of disulfide-linked dimers.

It carries out the reaction alpha-D-glucosamine 6-phosphate + H2O = beta-D-fructose 6-phosphate + NH4(+). Its pathway is amino-sugar metabolism; N-acetylneuraminate degradation; D-fructose 6-phosphate from N-acetylneuraminate: step 5/5. Its activity is regulated as follows. Allosterically activated by N-acetylglucosamine 6-phosphate (GlcNAc6P). Functionally, catalyzes the reversible isomerization-deamination of glucosamine 6-phosphate (GlcN6P) to form fructose 6-phosphate (Fru6P) and ammonium ion. The protein is Glucosamine-6-phosphate deaminase of Shigella flexneri serotype 5b (strain 8401).